The following is a 1109-amino-acid chain: DNA-directed RNA polymerase subunit beta (1109 aa).

The protein belongs to the RNA polymerase beta chain family. In plastids the minimal PEP RNA polymerase catalytic core is composed of four subunits: alpha, beta, beta', and beta''. When a (nuclear-encoded) sigma factor is associated with the core the holoenzyme is formed, which can initiate transcription.

It localises to the plastid. Its subcellular location is the chloroplast. It carries out the reaction RNA(n) + a ribonucleoside 5'-triphosphate = RNA(n+1) + diphosphate. DNA-dependent RNA polymerase catalyzes the transcription of DNA into RNA using the four ribonucleoside triphosphates as substrates. The protein is DNA-directed RNA polymerase subunit beta of Nephroselmis olivacea (Green alga).